We begin with the raw amino-acid sequence, 320 residues long: HPr kinase/phosphorylase (320 aa).

Active-site residues include His141 and Lys162. An ATP-binding site is contributed by 156 to 163; sequence GHSGLGKS. Ser163 is a Mg(2+) binding site. Asp180 functions as the Proton acceptor; for phosphorylation activity. Proton donor; for dephosphorylation activity in the catalytic mechanism. The important for the catalytic mechanism of both phosphorylation and dephosphorylation stretch occupies residues 204-213; that stretch reads LEVRGLGILN. Mg(2+) is bound at residue Glu205. Residue Arg248 is part of the active site. The important for the catalytic mechanism of dephosphorylation stretch occupies residues 269–274; sequence PVAVGR.

The protein belongs to the HPrK/P family. As to quaternary structure, homohexamer. Requires Mg(2+) as cofactor.

The catalysed reaction is [HPr protein]-L-serine + ATP = [HPr protein]-O-phospho-L-serine + ADP + H(+). It carries out the reaction [HPr protein]-O-phospho-L-serine + phosphate + H(+) = [HPr protein]-L-serine + diphosphate. Its function is as follows. Catalyzes the ATP- as well as the pyrophosphate-dependent phosphorylation of a specific serine residue in HPr, a phosphocarrier protein of the phosphoenolpyruvate-dependent sugar phosphotransferase system (PTS). HprK/P also catalyzes the pyrophosphate-producing, inorganic phosphate-dependent dephosphorylation (phosphorolysis) of seryl-phosphorylated HPr (P-Ser-HPr). The protein is HPr kinase/phosphorylase of Neisseria meningitidis serogroup A / serotype 4A (strain DSM 15465 / Z2491).